Consider the following 83-residue polypeptide: UPF0512 protein G (83 aa).

This sequence belongs to the UPF0512 family.

This is UPF0512 protein G from Dictyostelium discoideum (Social amoeba).